We begin with the raw amino-acid sequence, 323 residues long: Glyoxylate/hydroxypyruvate reductase B (323 aa).

Residues arginine 237 and glutamate 266 contribute to the active site. Histidine 285 serves as the catalytic Proton donor.

The protein belongs to the D-isomer specific 2-hydroxyacid dehydrogenase family. GhrB subfamily. In terms of assembly, homodimer.

The protein resides in the cytoplasm. It carries out the reaction glycolate + NADP(+) = glyoxylate + NADPH + H(+). The catalysed reaction is (R)-glycerate + NAD(+) = 3-hydroxypyruvate + NADH + H(+). It catalyses the reaction (R)-glycerate + NADP(+) = 3-hydroxypyruvate + NADPH + H(+). In terms of biological role, catalyzes the NADPH-dependent reduction of glyoxylate and hydroxypyruvate into glycolate and glycerate, respectively. The protein is Glyoxylate/hydroxypyruvate reductase B of Klebsiella pneumoniae subsp. pneumoniae (strain ATCC 700721 / MGH 78578).